The chain runs to 154 residues: Nucleoside diphosphate kinase A1 (154 aa).

The ATP site is built by lysine 13, phenylalanine 61, arginine 89, threonine 95, arginine 106, and asparagine 116. Catalysis depends on histidine 119, which acts as the Pros-phosphohistidine intermediate.

Belongs to the NDK family. It depends on Mg(2+) as a cofactor.

It localises to the cytoplasm. It carries out the reaction a 2'-deoxyribonucleoside 5'-diphosphate + ATP = a 2'-deoxyribonucleoside 5'-triphosphate + ADP. It catalyses the reaction a ribonucleoside 5'-diphosphate + ATP = a ribonucleoside 5'-triphosphate + ADP. Functionally, major role in the synthesis of nucleoside triphosphates other than ATP. The ATP gamma phosphate is transferred to the NDP beta phosphate via a ping-pong mechanism, using a phosphorylated active-site intermediate. This chain is Nucleoside diphosphate kinase A1, found in Xenopus laevis (African clawed frog).